The following is a 451-amino-acid chain: Glucose-6-phosphate isomerase (451 aa).

The active-site Proton donor is the glutamate 291. Active-site residues include histidine 312 and lysine 426.

It belongs to the GPI family.

Its subcellular location is the cytoplasm. It carries out the reaction alpha-D-glucose 6-phosphate = beta-D-fructose 6-phosphate. Its pathway is carbohydrate biosynthesis; gluconeogenesis. It functions in the pathway carbohydrate degradation; glycolysis; D-glyceraldehyde 3-phosphate and glycerone phosphate from D-glucose: step 2/4. Its function is as follows. Catalyzes the reversible isomerization of glucose-6-phosphate to fructose-6-phosphate. This is Glucose-6-phosphate isomerase from Caldanaerobacter subterraneus subsp. tengcongensis (strain DSM 15242 / JCM 11007 / NBRC 100824 / MB4) (Thermoanaerobacter tengcongensis).